The following is a 1113-amino-acid chain: Lon protease homolog, mitochondrial (1113 aa).

A mitochondrion-targeting transit peptide spans 1 to 61 (MLRGQTLPWR…RAFSSSSIRR (61 aa)). Residues 42-196 (SRLHRSLPTS…SGEKALQKPS (155 aa)) form a disordered region. Composition is skewed to basic and acidic residues over residues 64–99 (KPPP…RKAA), 124–143 (KAGA…KDGN), and 178–192 (DGGK…EKAL). A Lon N-terminal domain is found at 204-456 (VMAIPIAKRP…KALVVLKKEL (253 aa)). 609–616 (GPPGVGKT) lines the ATP pocket. The span at 828 to 858 (LTDEGKAVQEESQKETESPDSKSPVDPEKST) shows a compositional bias: basic and acidic residues. The interval 828 to 864 (LTDEGKAVQEESQKETESPDSKSPVDPEKSTTETPRV) is disordered. Residues 898-1084 (TFPPGVTMGL…SEVFDLLFTD (187 aa)) form the Lon proteolytic domain. Active-site residues include serine 990 and lysine 1033.

The protein belongs to the peptidase S16 family. Homohexamer or homoheptamer. Organized in a ring with a central cavity.

The protein localises to the mitochondrion matrix. The enzyme catalyses Hydrolysis of proteins in presence of ATP.. Its function is as follows. ATP-dependent serine protease that mediates the selective degradation of misfolded, unassembled or oxidatively damaged polypeptides as well as certain short-lived regulatory proteins in the mitochondrial matrix. May also have a chaperone function in the assembly of inner membrane protein complexes. Participates in the regulation of mitochondrial gene expression and in the maintenance of the integrity of the mitochondrial genome. Binds to mitochondrial DNA in a site-specific manner. The protein is Lon protease homolog, mitochondrial (pim1) of Aspergillus niger (strain ATCC MYA-4892 / CBS 513.88 / FGSC A1513).